Reading from the N-terminus, the 180-residue chain is Cytidylate kinase (180 aa).

7–15 (GLPGSGTTT) lines the ATP pocket.

The protein belongs to the cytidylate kinase family. Type 2 subfamily.

It is found in the cytoplasm. The enzyme catalyses CMP + ATP = CDP + ADP. The catalysed reaction is dCMP + ATP = dCDP + ADP. This Methanosarcina acetivorans (strain ATCC 35395 / DSM 2834 / JCM 12185 / C2A) protein is Cytidylate kinase.